The following is a 217-amino-acid chain: ATP-dependent Clp protease proteolytic subunit 2 (217 aa).

Residue serine 121 is the Nucleophile of the active site. Histidine 146 is a catalytic residue.

Belongs to the peptidase S14 family. In terms of assembly, fourteen ClpP subunits assemble into 2 heptameric rings which stack back to back to give a disk-like structure with a central cavity, resembling the structure of eukaryotic proteasomes.

It is found in the cytoplasm. The catalysed reaction is Hydrolysis of proteins to small peptides in the presence of ATP and magnesium. alpha-casein is the usual test substrate. In the absence of ATP, only oligopeptides shorter than five residues are hydrolyzed (such as succinyl-Leu-Tyr-|-NHMec, and Leu-Tyr-Leu-|-Tyr-Trp, in which cleavage of the -Tyr-|-Leu- and -Tyr-|-Trp bonds also occurs).. In terms of biological role, cleaves peptides in various proteins in a process that requires ATP hydrolysis. Has a chymotrypsin-like activity. Plays a major role in the degradation of misfolded proteins. The protein is ATP-dependent Clp protease proteolytic subunit 2 of Paraburkholderia xenovorans (strain LB400).